The primary structure comprises 1044 residues: Ribonucleoside-diphosphate reductase subunit alpha (1044 aa).

3 consecutive ATP-cone domains span residues 9 to 111, 118 to 217, and 235 to 325; these read YTIV…KAER, IAII…ARAR, and YVVQ…ETLG. Residues threonine 440, 455 to 456, glycine 484, 668 to 672, and 855 to 859 contribute to the substrate site; these read SC, NLCTE, and PTATI. Cysteine 456 and cysteine 685 are joined by a disulfide. Asparagine 668 (proton acceptor) is an active-site residue. The Cysteine radical intermediate role is filled by cysteine 670. Glutamate 672 serves as the catalytic Proton acceptor.

The protein belongs to the ribonucleoside diphosphate reductase large chain family. As to quaternary structure, tetramer of two alpha and two beta subunits.

It catalyses the reaction a 2'-deoxyribonucleoside 5'-diphosphate + [thioredoxin]-disulfide + H2O = a ribonucleoside 5'-diphosphate + [thioredoxin]-dithiol. Its activity is regulated as follows. Under complex allosteric control mediated by deoxynucleoside triphosphates and ATP binding. The type of nucleotide bound at the specificity site determines substrate preference. It seems probable that ATP makes the enzyme reduce CDP and UDP, dGTP favors ADP reduction and dTTP favors GDP reduction. In terms of biological role, provides the precursors necessary for DNA synthesis. Catalyzes the biosynthesis of deoxyribonucleotides from the corresponding ribonucleotides. In Chlamydia pneumoniae (Chlamydophila pneumoniae), this protein is Ribonucleoside-diphosphate reductase subunit alpha (nrdA).